The sequence spans 89 residues: Small ribosomal subunit protein uS15 (89 aa).

The protein belongs to the universal ribosomal protein uS15 family. Part of the 30S ribosomal subunit. Forms a bridge to the 50S subunit in the 70S ribosome, contacting the 23S rRNA.

One of the primary rRNA binding proteins, it binds directly to 16S rRNA where it helps nucleate assembly of the platform of the 30S subunit by binding and bridging several RNA helices of the 16S rRNA. Functionally, forms an intersubunit bridge (bridge B4) with the 23S rRNA of the 50S subunit in the ribosome. The polypeptide is Small ribosomal subunit protein uS15 (Streptococcus mutans serotype c (strain ATCC 700610 / UA159)).